A 382-amino-acid polypeptide reads, in one-letter code: DnaJ homolog dnj-20 (382 aa).

An N-terminal signal peptide occupies residues 1 to 21; the sequence is MRILNVSLLVLTAFLVDFVEC. The 66-residue stretch at 24–89 folds into the J domain; that stretch reads DFYKILGVSK…EKRAMYDRHG (66 aa).

This chain is DnaJ homolog dnj-20, found in Caenorhabditis briggsae.